The primary structure comprises 218 residues: Protein GrpE (218 aa).

Composition is skewed to basic and acidic residues over residues 1–13 (MSKN…HQNN) and 20–32 (VDKK…NKQE). The interval 1–32 (MSKNNENIKHQNNDKVNNQVDKKETKNHNKQE) is disordered.

This sequence belongs to the GrpE family. Homodimer.

The protein localises to the cytoplasm. Functionally, participates actively in the response to hyperosmotic and heat shock by preventing the aggregation of stress-denatured proteins, in association with DnaK and GrpE. It is the nucleotide exchange factor for DnaK and may function as a thermosensor. Unfolded proteins bind initially to DnaJ; upon interaction with the DnaJ-bound protein, DnaK hydrolyzes its bound ATP, resulting in the formation of a stable complex. GrpE releases ADP from DnaK; ATP binding to DnaK triggers the release of the substrate protein, thus completing the reaction cycle. Several rounds of ATP-dependent interactions between DnaJ, DnaK and GrpE are required for fully efficient folding. The polypeptide is Protein GrpE (Ureaplasma parvum serovar 3 (strain ATCC 27815 / 27 / NCTC 11736)).